The primary structure comprises 580 residues: DNA ligase B (580 aa).

Lys-135 acts as the N6-AMP-lysine intermediate in catalysis.

This sequence belongs to the NAD-dependent DNA ligase family. LigB subfamily.

It catalyses the reaction NAD(+) + (deoxyribonucleotide)n-3'-hydroxyl + 5'-phospho-(deoxyribonucleotide)m = (deoxyribonucleotide)n+m + AMP + beta-nicotinamide D-nucleotide.. Functionally, catalyzes the formation of phosphodiester linkages between 5'-phosphoryl and 3'-hydroxyl groups in double-stranded DNA using NAD as a coenzyme and as the energy source for the reaction. This is DNA ligase B from Photorhabdus laumondii subsp. laumondii (strain DSM 15139 / CIP 105565 / TT01) (Photorhabdus luminescens subsp. laumondii).